The following is a 195-amino-acid chain: ATP-dependent Clp protease proteolytic subunit (195 aa).

The Nucleophile role is filled by Ser-99. His-124 is a catalytic residue.

Belongs to the peptidase S14 family. As to quaternary structure, fourteen ClpP subunits assemble into 2 heptameric rings which stack back to back to give a disk-like structure with a central cavity, resembling the structure of eukaryotic proteasomes.

The protein resides in the cytoplasm. It catalyses the reaction Hydrolysis of proteins to small peptides in the presence of ATP and magnesium. alpha-casein is the usual test substrate. In the absence of ATP, only oligopeptides shorter than five residues are hydrolyzed (such as succinyl-Leu-Tyr-|-NHMec, and Leu-Tyr-Leu-|-Tyr-Trp, in which cleavage of the -Tyr-|-Leu- and -Tyr-|-Trp bonds also occurs).. In terms of biological role, cleaves peptides in various proteins in a process that requires ATP hydrolysis. Has a chymotrypsin-like activity. Plays a major role in the degradation of misfolded proteins. This is ATP-dependent Clp protease proteolytic subunit from Coxiella burnetii (strain RSA 331 / Henzerling II).